A 156-amino-acid polypeptide reads, in one-letter code: Small ribosomal subunit protein uS7 (156 aa).

The protein belongs to the universal ribosomal protein uS7 family. In terms of assembly, part of the 30S ribosomal subunit. Contacts proteins S9 and S11.

Functionally, one of the primary rRNA binding proteins, it binds directly to 16S rRNA where it nucleates assembly of the head domain of the 30S subunit. Is located at the subunit interface close to the decoding center, probably blocks exit of the E-site tRNA. The sequence is that of Small ribosomal subunit protein uS7 from Pseudomonas aeruginosa (strain LESB58).